The sequence spans 172 residues: Ribosome maturation factor RimM (172 aa).

The PRC barrel domain occupies 96 to 168; sequence DGEFYYHEII…RVDVEILEGL (73 aa).

The protein belongs to the RimM family. In terms of assembly, binds ribosomal protein uS19.

It is found in the cytoplasm. In terms of biological role, an accessory protein needed during the final step in the assembly of 30S ribosomal subunit, possibly for assembly of the head region. Essential for efficient processing of 16S rRNA. May be needed both before and after RbfA during the maturation of 16S rRNA. It has affinity for free ribosomal 30S subunits but not for 70S ribosomes. The chain is Ribosome maturation factor RimM from Streptococcus pneumoniae serotype 4 (strain ATCC BAA-334 / TIGR4).